The primary structure comprises 298 residues: Glutamyl-Q tRNA(Asp) synthetase (298 aa).

L-glutamate contacts are provided by residues R9 to S13 and E45. The 'HIGH' region motif lies at P12–S22. Zn(2+) is bound by residues C101, C103, Y121, and C125. L-glutamate contacts are provided by Y179 and R197. The 'KMSKS' region motif lies at K235–Q239. Residue K238 participates in ATP binding.

It belongs to the class-I aminoacyl-tRNA synthetase family. GluQ subfamily. It depends on Zn(2+) as a cofactor.

Its function is as follows. Catalyzes the tRNA-independent activation of glutamate in presence of ATP and the subsequent transfer of glutamate onto a tRNA(Asp). Glutamate is transferred on the 2-amino-5-(4,5-dihydroxy-2-cyclopenten-1-yl) moiety of the queuosine in the wobble position of the QUC anticodon. The chain is Glutamyl-Q tRNA(Asp) synthetase from Chromobacterium violaceum (strain ATCC 12472 / DSM 30191 / JCM 1249 / CCUG 213 / NBRC 12614 / NCIMB 9131 / NCTC 9757 / MK).